Here is a 333-residue protein sequence, read N- to C-terminus: Phosphate acyltransferase (333 aa).

The protein belongs to the PlsX family. In terms of assembly, homodimer. Probably interacts with PlsY.

It is found in the cytoplasm. It carries out the reaction a fatty acyl-[ACP] + phosphate = an acyl phosphate + holo-[ACP]. It participates in lipid metabolism; phospholipid metabolism. Catalyzes the reversible formation of acyl-phosphate (acyl-PO(4)) from acyl-[acyl-carrier-protein] (acyl-ACP). This enzyme utilizes acyl-ACP as fatty acyl donor, but not acyl-CoA. The polypeptide is Phosphate acyltransferase (Lactobacillus acidophilus (strain ATCC 700396 / NCK56 / N2 / NCFM)).